The chain runs to 516 residues: Arabinose import ATP-binding protein AraG (516 aa).

ABC transporter domains follow at residues L5–R240 and R240–S497. ATP is bound at residue G37 to S44.

It belongs to the ABC transporter superfamily. Arabinose importer (TC 3.A.1.2.2) family. As to quaternary structure, the complex is composed of two ATP-binding proteins (AraG), two transmembrane proteins (AraH) and a solute-binding protein (AraF).

It is found in the cell inner membrane. It catalyses the reaction L-arabinose(out) + ATP + H2O = L-arabinose(in) + ADP + phosphate + H(+). In terms of biological role, part of the ABC transporter complex AraFGH involved in arabinose import. Responsible for energy coupling to the transport system. In Paraburkholderia xenovorans (strain LB400), this protein is Arabinose import ATP-binding protein AraG.